We begin with the raw amino-acid sequence, 106 residues long: ATP-dependent Clp protease adapter protein ClpS (106 aa).

The protein belongs to the ClpS family. As to quaternary structure, binds to the N-terminal domain of the chaperone ClpA.

Its function is as follows. Involved in the modulation of the specificity of the ClpAP-mediated ATP-dependent protein degradation. The sequence is that of ATP-dependent Clp protease adapter protein ClpS from Serratia proteamaculans (strain 568).